The chain runs to 253 residues: uncharacterized protein (253 aa).

Belongs to the MG439/MG440 family.

This is an uncharacterized protein from Mycoplasma pneumoniae (strain ATCC 29342 / M129 / Subtype 1) (Mycoplasmoides pneumoniae).